The primary structure comprises 1091 residues: MGVQGFQEFLEKRCPGAVVPVDLLKLARTVSRQQQQQHLHRQLPPAALAPGAPRITRGSAPLPPPPLPPAAFGAYSGGAGPSRHHHPAHHFHHHGQAPPGLHPPPPPPLPGARVLVDAGSALPRLYGGYQTDWVCGGQWNAMLGYLSALCQACAYPGGDGLELVVMFPGGLGKDRLAEWGRRCQAERQTAQLIVGHVGNKGTPPPRAWFLPPACLSHCVRLALIRFRVKVFQSLEDHHLEVVAFFRENGFHGLLAHDSEYALYNIPSYYSSHALKLSWNGKNLTTNQFLMQEVAKQLGLKRMNFPIFAALLGNHILPDEDLAAFHWSLLGPEHPLASLKVRAHQLVLPPCDVVIKAVSEYVSSIKDPSNLDVVGKDVFKQSQSRTEDKIERFKKAVEYYSVTTKLSSLPVGPSFLGFRNNRLGNPPLPRNQMGPISPGKPMFSRQVPQKMKYPPPFPMGPNSSLLFSHSVGESHAFSEDAMLQDNSFANWAVSYDSNTSQFPNCLTSKTSPPLGPDSSHSSSSDGDEANGAGSEQITEAVQQQPGWEDPNGDRGAWGQPADAGVSETTVAESEPHIPSLLSMSTRNHMDITIPPLPPVAPEVLRVAEHRHRRGLMYPYIYHVLTKGEIKIPVCIEDECNMELPPAALLFRSARQYVYGVLFSLAETQRKMERLAIRRRLPMEVPSVILKEWSAYKGKSPQTPELVSALTFREWTCPNLKKLWLGKAVEDKNRRMRAFLACMKSDTPSMLNPANVPTHLLLMCCVLRYMVQWPGGRILHRHELDTFLAQAVSTQLYEPDQLQELKIEKLDARGIQLAALFMSGVDTALFANDACGQPVPWEHCCPWIYFDGKLFQSKLIKAGRERVSLVELCDGQADLASKVEKMRQSILEGVNMNHPPPSALLPSPTFVPPMVPSLYPVSLYSRAMGSFPPPPQARSRGFAGLHPIPPQGGKLEIAGMVVGQWAGSRSSRSRGSFGMQVVSVGGPGKGHGKEQAGRGSKGHKKGNKQGSSDVISKAVELHQSRARSQVNGNNGTLIVEEKSDPLPAPSQCALSRDSNECNNSDDHCLPVKNGEKNHVPEQELEAVAQQKEE.

Residues 35 to 53 (QQQHLHRQLPPAALAPGAP) show a composition bias toward low complexity. Disordered stretches follow at residues 35–105 (QQQH…HPPP), 503–575 (NCLT…SEPH), 966–1010 (SRSS…QGSS), and 1037–1077 (VEEK…KNHV). Position 57 is an omega-N-methylarginine (arginine 57). A compositionally biased stretch (basic residues) spans 82–95 (SRHHHPAHHFHHHG). Over residues 532–544 (GSEQITEAVQQQP) the composition is skewed to polar residues. Residues 966 to 976 (SRSSRSRGSFG) are compositionally biased toward low complexity. Residue arginine 972 is modified to Omega-N-methylarginine. Positions 1062-1077 (SDDHCLPVKNGEKNHV) are enriched in basic and acidic residues.

Belongs to the constitutive coactivator of PPAR-gamma family.

This Mus musculus (Mouse) protein is Constitutive coactivator of PPAR-gamma-like protein 2 (Fam120c).